Reading from the N-terminus, the 395-residue chain is Chorismate synthase (395 aa).

Residues R40 and R46 each coordinate NADP(+). FMN is bound by residues 137 to 139, G308, 323 to 327, and R349; these read RSS and KPLPT.

It belongs to the chorismate synthase family. As to quaternary structure, homotetramer. The cofactor is FMNH2.

It catalyses the reaction 5-O-(1-carboxyvinyl)-3-phosphoshikimate = chorismate + phosphate. Its pathway is metabolic intermediate biosynthesis; chorismate biosynthesis; chorismate from D-erythrose 4-phosphate and phosphoenolpyruvate: step 7/7. In terms of biological role, catalyzes the anti-1,4-elimination of the C-3 phosphate and the C-6 proR hydrogen from 5-enolpyruvylshikimate-3-phosphate (EPSP) to yield chorismate, which is the branch point compound that serves as the starting substrate for the three terminal pathways of aromatic amino acid biosynthesis. This reaction introduces a second double bond into the aromatic ring system. This is Chorismate synthase from Gloeobacter violaceus (strain ATCC 29082 / PCC 7421).